Consider the following 130-residue polypeptide: S-adenosylmethionine decarboxylase proenzyme (130 aa).

The active-site Schiff-base intermediate with substrate; via pyruvic acid is Ser66. Ser66 is modified (pyruvic acid (Ser); by autocatalysis). His71 acts as the Proton acceptor; for processing activity in catalysis. Cys86 acts as the Proton donor; for catalytic activity in catalysis.

It belongs to the prokaryotic AdoMetDC family. Type 1 subfamily. As to quaternary structure, heterotetramer of two alpha and two beta chains arranged as a dimer of alpha/beta heterodimers. Pyruvate serves as cofactor. Post-translationally, is synthesized initially as an inactive proenzyme. Formation of the active enzyme involves a self-maturation process in which the active site pyruvoyl group is generated from an internal serine residue via an autocatalytic post-translational modification. Two non-identical subunits are generated from the proenzyme in this reaction, and the pyruvate is formed at the N-terminus of the alpha chain, which is derived from the carboxyl end of the proenzyme. The post-translation cleavage follows an unusual pathway, termed non-hydrolytic serinolysis, in which the side chain hydroxyl group of the serine supplies its oxygen atom to form the C-terminus of the beta chain, while the remainder of the serine residue undergoes an oxidative deamination to produce ammonia and the pyruvoyl group blocking the N-terminus of the alpha chain.

It catalyses the reaction S-adenosyl-L-methionine + H(+) = S-adenosyl 3-(methylsulfanyl)propylamine + CO2. The protein operates within amine and polyamine biosynthesis; S-adenosylmethioninamine biosynthesis; S-adenosylmethioninamine from S-adenosyl-L-methionine: step 1/1. In terms of biological role, catalyzes the decarboxylation of S-adenosylmethionine to S-adenosylmethioninamine (dcAdoMet), the propylamine donor required for the synthesis of the polyamines spermine and spermidine from the diamine putrescine. This Bacillus cereus (strain ATCC 10987 / NRS 248) protein is S-adenosylmethionine decarboxylase proenzyme.